A 395-amino-acid polypeptide reads, in one-letter code: Fractalkine (395 aa).

Residues Met1–Gly24 form the signal peptide. Residues Gln25–Gly100 are chemokine and involved in interaction with ITGAV:ITGB3 and ITGA4:ITGB1. The Extracellular segment spans residues Gln25 to Thr336. Intrachain disulfides connect Cys32/Cys58 and Cys36/Cys74. Residues Gly101–Thr336 form a mucin-like stalk region. Polar residues-rich tracts occupy residues Ala148–Ala172 and Ala201–Trp210. Disordered regions lie at residues Ala148 to Lys180 and Ala201 to Gln305. Residues Ser218–Pro236 show a composition bias toward low complexity. The helical transmembrane segment at Arg337–Met357 threads the bilayer. Topologically, residues Phe358–Val395 are cytoplasmic.

It belongs to the intercrine delta family. In terms of assembly, monomer. Forms a ternary complex with CX3CR1 and ITGAV:ITGB3 or ITGA4:ITGB1. A soluble short 80 kDa form may be released by proteolytic cleavage from the long membrane-anchored form. As to expression, highest levels in brain. Lower levels in kidney, heart and lung. Also found in skeletal muscle and testis. Highly expressed in lesional smooth muscle cells, but not macrophages. Low levels of ABCD-3 mRNA were also found in anti-CD40-stimulated splenic B-cells, but not in resting B-cells. Also expressed in dendritic cells.

Its subcellular location is the cell membrane. The protein resides in the secreted. Chemokine that acts as a ligand for both CX3CR1 and integrins ITGAV:ITGB3 and ITGA4:ITGB1. The CX3CR1-CX3CL1 signaling exerts distinct functions in different tissue compartments, such as immune response, inflammation, cell adhesion and chemotaxis. Regulates leukocyte adhesion and migration processes at the endothelium. Can activate integrins in both a CX3CR1-dependent and CX3CR1-independent manner. In the presence of CX3CR1, activates integrins by binding to the classical ligand-binding site (site 1) in integrins. In the absence of CX3CR1, binds to a second site (site 2) in integrins which is distinct from site 1 and enhances the binding of other integrin ligands to site 1. In terms of biological role, the soluble form is chemotactic for T-cells and monocytes, but not for neutrophils. Functionally, the membrane-bound form promotes adhesion of those leukocytes to endothelial cells. The polypeptide is Fractalkine (Mus musculus (Mouse)).